The chain runs to 199 residues: 7-methyl-GTP pyrophosphatase (199 aa).

Catalysis depends on Asp76, which acts as the Proton acceptor.

The protein belongs to the Maf family. YceF subfamily. The cofactor is a divalent metal cation.

The protein resides in the cytoplasm. It carries out the reaction N(7)-methyl-GTP + H2O = N(7)-methyl-GMP + diphosphate + H(+). Its function is as follows. Nucleoside triphosphate pyrophosphatase that hydrolyzes 7-methyl-GTP (m(7)GTP). May have a dual role in cell division arrest and in preventing the incorporation of modified nucleotides into cellular nucleic acids. The chain is 7-methyl-GTP pyrophosphatase from Hahella chejuensis (strain KCTC 2396).